A 178-amino-acid polypeptide reads, in one-letter code: Large ribosomal subunit protein uL13m (178 aa).

The protein belongs to the universal ribosomal protein uL13 family. In terms of assembly, component of the mitochondrial ribosome large subunit (39S) which comprises a 16S rRNA and about 50 distinct proteins.

The protein localises to the mitochondrion. This chain is Large ribosomal subunit protein uL13m (mRpL13), found in Drosophila melanogaster (Fruit fly).